The chain runs to 169 residues: SsrA-binding protein (169 aa).

This sequence belongs to the SmpB family.

It is found in the cytoplasm. Required for rescue of stalled ribosomes mediated by trans-translation. Binds to transfer-messenger RNA (tmRNA), required for stable association of tmRNA with ribosomes. tmRNA and SmpB together mimic tRNA shape, replacing the anticodon stem-loop with SmpB. tmRNA is encoded by the ssrA gene; the 2 termini fold to resemble tRNA(Ala) and it encodes a 'tag peptide', a short internal open reading frame. During trans-translation Ala-aminoacylated tmRNA acts like a tRNA, entering the A-site of stalled ribosomes, displacing the stalled mRNA. The ribosome then switches to translate the ORF on the tmRNA; the nascent peptide is terminated with the 'tag peptide' encoded by the tmRNA and targeted for degradation. The ribosome is freed to recommence translation, which seems to be the essential function of trans-translation. The polypeptide is SsrA-binding protein (Mycolicibacterium paratuberculosis (strain ATCC BAA-968 / K-10) (Mycobacterium paratuberculosis)).